The following is a 216-amino-acid chain: uncharacterized protein (216 aa).

The Cupin type-2 domain maps to 125-176 (YPKSTNFDSHYHDCDEYWVIIEGAGTVVVGSRSFEVEVGDCVAIGMGHHHDL).

This is an uncharacterized protein from Sinorhizobium fredii (strain NBRC 101917 / NGR234).